We begin with the raw amino-acid sequence, 326 residues long: Phenylserine dehydratase (326 aa).

As to quaternary structure, monomer. Pyridoxal 5'-phosphate is required as a cofactor.

The enzyme catalyses L-threo-3-phenylserine = 3-phenylpyruvate + NH4(+). With respect to regulation, inhibited by phenylhydrazine, hydroxylamine, p-chloromercuribenzoate, and HgCl(2). This Ralstonia pickettii (Burkholderia pickettii) protein is Phenylserine dehydratase.